Reading from the N-terminus, the 123-residue chain is uncharacterized protein (123 aa).

A signal peptide spans 1–20 (MSPLIVGTLIIILLSGLATA). Glycine 96 carries GPI-anchor amidated glycine lipidation. The propeptide at 97 to 123 (SSPTTKRVIYIVMILLVLITLAVNLKH) is removed in mature form.

The protein localises to the cell membrane. This is an uncharacterized protein from Schizosaccharomyces pombe (strain 972 / ATCC 24843) (Fission yeast).